Here is a 280-residue protein sequence, read N- to C-terminus: 2,3,4,5-tetrahydropyridine-2,6-dicarboxylate N-succinyltransferase (280 aa).

Positions 107 and 144 each coordinate substrate.

Belongs to the transferase hexapeptide repeat family. As to quaternary structure, homotrimer.

Its subcellular location is the cytoplasm. It catalyses the reaction (S)-2,3,4,5-tetrahydrodipicolinate + succinyl-CoA + H2O = (S)-2-succinylamino-6-oxoheptanedioate + CoA. It functions in the pathway amino-acid biosynthesis; L-lysine biosynthesis via DAP pathway; LL-2,6-diaminopimelate from (S)-tetrahydrodipicolinate (succinylase route): step 1/3. This Paramagnetospirillum magneticum (strain ATCC 700264 / AMB-1) (Magnetospirillum magneticum) protein is 2,3,4,5-tetrahydropyridine-2,6-dicarboxylate N-succinyltransferase.